Here is a 286-residue protein sequence, read N- to C-terminus: ATP synthase gamma chain (286 aa).

Belongs to the ATPase gamma chain family. As to quaternary structure, F-type ATPases have 2 components, CF(1) - the catalytic core - and CF(0) - the membrane proton channel. CF(1) has five subunits: alpha(3), beta(3), gamma(1), delta(1), epsilon(1). CF(0) has three main subunits: a, b and c.

It is found in the cell inner membrane. Functionally, produces ATP from ADP in the presence of a proton gradient across the membrane. The gamma chain is believed to be important in regulating ATPase activity and the flow of protons through the CF(0) complex. In Pseudomonas fluorescens (strain ATCC BAA-477 / NRRL B-23932 / Pf-5), this protein is ATP synthase gamma chain.